The chain runs to 587 residues: Phosphomethylpyrimidine synthase (587 aa).

Substrate is bound by residues N218, M247, Y276, H312, 332–334 (SRG), 373–376 (DGLR), and E412. H416 lines the Zn(2+) pocket. Y439 contacts substrate. Residue H480 participates in Zn(2+) binding. Residues C560, C563, and C568 each coordinate [4Fe-4S] cluster.

It belongs to the ThiC family. It depends on [4Fe-4S] cluster as a cofactor.

The enzyme catalyses 5-amino-1-(5-phospho-beta-D-ribosyl)imidazole + S-adenosyl-L-methionine = 4-amino-2-methyl-5-(phosphooxymethyl)pyrimidine + CO + 5'-deoxyadenosine + formate + L-methionine + 3 H(+). It functions in the pathway cofactor biosynthesis; thiamine diphosphate biosynthesis. Its function is as follows. Catalyzes the synthesis of the hydroxymethylpyrimidine phosphate (HMP-P) moiety of thiamine from aminoimidazole ribotide (AIR) in a radical S-adenosyl-L-methionine (SAM)-dependent reaction. The sequence is that of Phosphomethylpyrimidine synthase from Porphyromonas gingivalis (strain ATCC BAA-308 / W83).